The primary structure comprises 74 residues: Sec-independent protein translocase protein TatA (74 aa).

A helical membrane pass occupies residues 1–21 (MGSMSWIHWVIVLGIVALLFG). Positions 51–74 (EVADNKAKSALPRTEAEAEELRKS) are disordered. The segment covering 64 to 74 (TEAEAEELRKS) has biased composition (basic and acidic residues).

It belongs to the TatA/E family. As to quaternary structure, the Tat system comprises two distinct complexes: a TatABC complex, containing multiple copies of TatA, TatB and TatC subunits, and a separate TatA complex, containing only TatA subunits. Substrates initially bind to the TatABC complex, which probably triggers association of the separate TatA complex to form the active translocon.

Its subcellular location is the cell inner membrane. Functionally, part of the twin-arginine translocation (Tat) system that transports large folded proteins containing a characteristic twin-arginine motif in their signal peptide across membranes. TatA could form the protein-conducting channel of the Tat system. The polypeptide is Sec-independent protein translocase protein TatA (Caulobacter vibrioides (strain ATCC 19089 / CIP 103742 / CB 15) (Caulobacter crescentus)).